The following is a 450-amino-acid chain: Putative gustatory receptor 28a (450 aa).

Residues 1–47 (MAFKLWERFSQADNVFQALRPLTFISLLGLAPFRLNLNPRKEVQTSK) lie on the Cytoplasmic side of the membrane. Residues 48–68 (FSFFAGIVHFLFFVLCFGISV) traverse the membrane as a helical segment. Residues 69–87 (KEGDSIIGYFFQTNITRFS) are Extracellular-facing. N-linked (GlcNAc...) asparagine glycosylation is present at N82. A helical transmembrane segment spans residues 88–108 (DGTLRLTGILAMSTIFGFAMF). The Cytoplasmic segment spans residues 109–138 (KRQRLVSIIQNNIVVDEIFVRLGMKLDYRR). Residues 139 to 159 (ILLSSFLISLGMLLFNVIYLC) traverse the membrane as a helical segment. Residues 160-171 (VSYSLLVSATIS) lie on the Extracellular side of the membrane. Residues 172–192 (PSFVTFTTFALPHINISLMVF) form a helical membrane-spanning segment. Residues 193–292 (KFLCTTDLAR…CQTIEEYFTY (100 aa)) lie on the Cytoplasmic side of the membrane. A helical transmembrane segment spans residues 293–313 (PLLGIIAISFLFILFDDFYIL). Over 314-329 (EAILNPKRLDVFEADE) the chain is Extracellular. Residues 330 to 350 (FFAFFLMQLIWYIVIIVLIVE) form a helical membrane-spanning segment. Residues 351–407 (GSSRTILHSSYTAAIVHKILNITDDPELRDRLFRLSLQLSHRKVLFTAAGLFRLDRT) are Cytoplasmic-facing. The helical transmembrane segment at 408–424 (LIFTITGAATCYLIILI) threads the bilayer. The Extracellular segment spans residues 425–450 (QFRFTHHMDDTSSNSTNNLHSIHLGD). N438 carries an N-linked (GlcNAc...) asparagine glycan.

Belongs to the insect chemoreceptor superfamily. Gustatory receptor (GR) family. Gr2a subfamily. As to expression, in addition to expression in a large number of taste neurons, Gr28a is also expressed in a few nonchemosensory neurons, including the campaniform sensilla of the wing, leg stretch receptors, and multiple dendritic (MD) neurons in the abdomen. In larvea, is expressed in neurons of the terminal external chemosensory organ, the dorsal external chemosensory organ, as well as in the ventral and posterior pharyngeal sense organ.

Its subcellular location is the cell membrane. In terms of biological role, probable gustatory receptor which mediates acceptance or avoidance behavior, depending on its substrates. Atypical expression also suggests nongustatory roles in the nervous system and tissues involved in proprioception, hygroreception, and other sensory modalities. It is also possible that it has chemosensory roles in the detection of internal ligands. The protein is Putative gustatory receptor 28a (Gr28a) of Drosophila melanogaster (Fruit fly).